Reading from the N-terminus, the 149-residue chain is Squidulin (149 aa).

N-acetylalanine is present on Ala1. EF-hand domains follow at residues 7-42 (KQIAEIKDAFDMFDIDGDGQITSKELRSVMKSLGRT), 43-78 (PSDAELEEMIREVDTDGNGTIEYAEFVEMMAKQMGP), 80-115 (DPEKEMREAFRVFDKDGNGLITAAELRQVMANFSDE), and 117-149 (LTSEEISEMIREADIDGDGMVNYEEFVKMMTPK). Ca(2+) contacts are provided by Asp20, Asp22, Asp24, Gln26, Glu31, Asp56, Asp58, Asn60, Thr62, Glu67, Asp93, Asp95, Asn97, Glu104, Asp130, Asp132, Asp134, Met136, and Glu141.

Belongs to the calmodulin family.

Not known. This protein has four functional calcium-binding sites. This Doryteuthis pealeii (Longfin inshore squid) protein is Squidulin.